A 901-amino-acid polypeptide reads, in one-letter code: HTH-type transcriptional regulator MalT (901 aa).

ATP is bound at residue 39 to 46; sequence SPAGYGKT. One can recognise an HTH luxR-type domain in the interval 829–894; it reads ELIRTSPLTQ…AAVQHAQKLL (66 aa). Positions 853–872 form a DNA-binding region, H-T-H motif; the sequence is NEQIAGELEVAATTIKTHIR.

Belongs to the MalT family. Monomer in solution. Oligomerizes to an active state in the presence of the positive effectors ATP and maltotriose.

Activated by ATP and maltotriose, which are both required for DNA binding. Its function is as follows. Positively regulates the transcription of the maltose regulon whose gene products are responsible for uptake and catabolism of malto-oligosaccharides. Specifically binds to the promoter region of its target genes, recognizing a short DNA motif called the MalT box. The chain is HTH-type transcriptional regulator MalT from Escherichia coli O6:H1 (strain CFT073 / ATCC 700928 / UPEC).